The sequence spans 151 residues: MTSLLLFGAGGLFDFDATLPLMALQVVLLTFILNALFFRPVGRVVEEREVYVTTSRAEAKQKLAEAEKLELELKEQLKSARIAAQQLIQEAEKDSEQLYREALAIANADANAAREKARREIDAQRDSALTQLKGDAEKLGDLIVNRLLAAK.

A helical transmembrane segment spans residues 18–38 (TLPLMALQVVLLTFILNALFF).

The protein belongs to the ATPase B chain family. As to quaternary structure, F-type ATPases have 2 components, F(1) - the catalytic core - and F(0) - the membrane proton channel. F(1) has five subunits: alpha(3), beta(3), gamma(1), delta(1), epsilon(1). F(0) has four main subunits: a(1), b(1), b'(1) and c(10-14). The alpha and beta chains form an alternating ring which encloses part of the gamma chain. F(1) is attached to F(0) by a central stalk formed by the gamma and epsilon chains, while a peripheral stalk is formed by the delta, b and b' chains.

Its subcellular location is the cellular thylakoid membrane. Functionally, f(1)F(0) ATP synthase produces ATP from ADP in the presence of a proton or sodium gradient. F-type ATPases consist of two structural domains, F(1) containing the extramembraneous catalytic core and F(0) containing the membrane proton channel, linked together by a central stalk and a peripheral stalk. During catalysis, ATP synthesis in the catalytic domain of F(1) is coupled via a rotary mechanism of the central stalk subunits to proton translocation. Its function is as follows. Component of the F(0) channel, it forms part of the peripheral stalk, linking F(1) to F(0). The b'-subunit is a diverged and duplicated form of b found in plants and photosynthetic bacteria. This chain is ATP synthase subunit b', found in Prochlorococcus marinus (strain MIT 9303).